Reading from the N-terminus, the 1046-residue chain is uncharacterized protein (1046 aa).

Residues 594–615 (LNSIPSDSSSSGSSRKSSPRGS) are compositionally biased toward low complexity. The interval 594–622 (LNSIPSDSSSSGSSRKSSPRGSPNLGEAP) is disordered.

This is an uncharacterized protein from Invertebrate iridescent virus 6 (IIV-6).